Here is a 353-residue protein sequence, read N- to C-terminus: MDDKKAGAGLSAEKQKALAAALSQIEKQFGKGSIMRMGDGEVEKDIQVVSTGSLGLDIALGVGGLPRGRVVEIYGPESSGKTTLTLQVVAEMQKLGGTCAFIDAEHALDVNYASKLGVDVGELLISQPDTGEQALEITDALVRSGSIDLIVIDSVAALVPKAEIEGEMGDSLPGLQARLMSQALRKLTGTIKRTNCLVIFINQIRMKIGVMFGSPETTTGGNALKFYASVRLDIRRIGSIKKGDDVIGNETKVKVVKNKVSPPFREAFFDILYGQGISRQGEIIDLGVDAKIVEKSGAWYSYNGDKIGQGKDNAREYLRENPDIAQEIENKVRAALGVAPMNSVPAAEVVTED.

Position 75–82 (75–82 (GPESSGKT)) interacts with ATP.

Belongs to the RecA family.

The protein localises to the cytoplasm. Can catalyze the hydrolysis of ATP in the presence of single-stranded DNA, the ATP-dependent uptake of single-stranded DNA by duplex DNA, and the ATP-dependent hybridization of homologous single-stranded DNAs. It interacts with LexA causing its activation and leading to its autocatalytic cleavage. This chain is Protein RecA, found in Cupriavidus pinatubonensis (strain JMP 134 / LMG 1197) (Cupriavidus necator (strain JMP 134)).